A 284-amino-acid polypeptide reads, in one-letter code: Trimeric intracellular cation channel type B (284 aa).

The Lumenal segment spans residues 1–15 (MESFSELSLQFSQLS). A helical membrane pass occupies residues 16–32 (MFPFFETAHYLTSVMSA). The Cytoplasmic segment spans residues 33–44 (REQAGAVDVASR). A helical transmembrane segment spans residues 45–68 (SPLASWFSSMLYCFGGGILSSILL). Residues 69-79 (AEPPVGILSNT) are Lumenal-facing. The helical transmembrane segment at 80–99 (TSIILASAVWYMVYYFPYDL) threads the bilayer. Residues 100 to 102 (FYN) lie on the Cytoplasmic side of the membrane. The chain crosses the membrane as a helical span at residues 103 to 121 (CFFFLPIRLILAGMKEVTR). A 1,2-diacyl-sn-glycero-3-phospho-(1D-myo-inositol-4,5-bisphosphate) is bound by residues Lys-117 and Arg-121. At 122 to 139 (TWKILSGVAHAHSHYKDA) the chain is on the lumenal side. The chain crosses the membrane as a helical span at residues 140–157 (MLVMITIGWARGAGGGLI). Over 158–178 (SNFEQLVRGVWKPESNEFLKM) the chain is Cytoplasmic. Residues 179 to 196 (SYPVKVTLIGAVLFTLQH) form a helical membrane-spanning segment. Topologically, residues 197–204 (GQYLPISR) are lumenal. The helical transmembrane segment at 205 to 225 (HNLMFIYTLFLILIKVTMMLT) threads the bilayer. The Cytoplasmic portion of the chain corresponds to 226–284 (RSTASPFLPLETSLQHILFSRQQIPAEVRESPSSSGDKGKPSKKTLDKDSGEQDNKKDN). The disordered stretch occupies residues 250–284 (PAEVRESPSSSGDKGKPSKKTLDKDSGEQDNKKDN). The span at 262 to 284 (DKGKPSKKTLDKDSGEQDNKKDN) shows a compositional bias: basic and acidic residues.

Belongs to the TMEM38 family. Homotrimer; conformation seems to be controled by binding to diacylglycerol (DAG).

It localises to the endoplasmic reticulum membrane. The catalysed reaction is K(+)(in) = K(+)(out). Channel activity is activated by increased cytosolic Ca(2+) levels and blocked by luminal high Ca(2+) levels. Functionally, intracellular monovalent cation channel required for maintenance of rapid intracellular calcium release. Acts as a potassium counter-ion channel that functions in synchronization with calcium release from intracellular stores. Activated by increased cytosolic Ca(2+) levels. This Xenopus tropicalis (Western clawed frog) protein is Trimeric intracellular cation channel type B (tmem38b).